Consider the following 383-residue polypeptide: tRNA-specific 2-thiouridylase MnmA (383 aa).

ATP contacts are provided by residues 29–36 and Met55; that span reads GMSGGVDS. The tract at residues 115 to 117 is interaction with target base in tRNA; that stretch reads NPD. Cys120 functions as the Nucleophile in the catalytic mechanism. Cysteines 120 and 217 form a disulfide. An ATP-binding site is contributed by Gly145. The interaction with tRNA stretch occupies residues 167-169; the sequence is KDQ. Residue Cys217 is the Cysteine persulfide intermediate of the active site. An interaction with tRNA region spans residues 329 to 330; sequence RY.

The protein belongs to the MnmA/TRMU family.

Its subcellular location is the cytoplasm. It carries out the reaction S-sulfanyl-L-cysteinyl-[protein] + uridine(34) in tRNA + AH2 + ATP = 2-thiouridine(34) in tRNA + L-cysteinyl-[protein] + A + AMP + diphosphate + H(+). Catalyzes the 2-thiolation of uridine at the wobble position (U34) of tRNA, leading to the formation of s(2)U34. The polypeptide is tRNA-specific 2-thiouridylase MnmA (Histophilus somni (strain 2336) (Haemophilus somnus)).